We begin with the raw amino-acid sequence, 134 residues long: Large ribosomal subunit protein uL22 (134 aa).

This sequence belongs to the universal ribosomal protein uL22 family. As to quaternary structure, part of the 50S ribosomal subunit.

In terms of biological role, this protein binds specifically to 23S rRNA; its binding is stimulated by other ribosomal proteins, e.g. L4, L17, and L20. It is important during the early stages of 50S assembly. It makes multiple contacts with different domains of the 23S rRNA in the assembled 50S subunit and ribosome. Its function is as follows. The globular domain of the protein is located near the polypeptide exit tunnel on the outside of the subunit, while an extended beta-hairpin is found that lines the wall of the exit tunnel in the center of the 70S ribosome. The protein is Large ribosomal subunit protein uL22 of Rhodococcus jostii (strain RHA1).